The following is a 313-amino-acid chain: Homoserine O-acetyltransferase (313 aa).

The active-site Acyl-thioester intermediate is the cysteine 144. Substrate is bound by residues lysine 165 and serine 194. The active-site Proton acceptor is the histidine 236. Glutamate 238 is an active-site residue. Residue arginine 250 coordinates substrate.

The protein belongs to the MetA family.

It is found in the cytoplasm. It carries out the reaction L-homoserine + acetyl-CoA = O-acetyl-L-homoserine + CoA. Its pathway is amino-acid biosynthesis; L-methionine biosynthesis via de novo pathway; O-acetyl-L-homoserine from L-homoserine: step 1/1. Its function is as follows. Transfers an acetyl group from acetyl-CoA to L-homoserine, forming acetyl-L-homoserine. This Jannaschia sp. (strain CCS1) protein is Homoserine O-acetyltransferase.